The chain runs to 132 residues: Small ribosomal subunit protein uS8 (132 aa).

It belongs to the universal ribosomal protein uS8 family. As to quaternary structure, part of the 30S ribosomal subunit. Contacts proteins S5 and S12.

One of the primary rRNA binding proteins, it binds directly to 16S rRNA central domain where it helps coordinate assembly of the platform of the 30S subunit. The sequence is that of Small ribosomal subunit protein uS8 from Anoxybacillus flavithermus (strain DSM 21510 / WK1).